Here is a 285-residue protein sequence, read N- to C-terminus: Pantothenate synthetase (285 aa).

30-37 (MGNLHRGH) is an ATP binding site. His37 acts as the Proton donor in catalysis. Gln61 serves as a coordination point for (R)-pantoate. Position 61 (Gln61) interacts with beta-alanine. 149–152 (GRKD) contacts ATP. Position 155 (Gln155) interacts with (R)-pantoate. Residues Val178 and 186-189 (LSSR) contribute to the ATP site.

The protein belongs to the pantothenate synthetase family. In terms of assembly, homodimer.

It is found in the cytoplasm. It catalyses the reaction (R)-pantoate + beta-alanine + ATP = (R)-pantothenate + AMP + diphosphate + H(+). It functions in the pathway cofactor biosynthesis; (R)-pantothenate biosynthesis; (R)-pantothenate from (R)-pantoate and beta-alanine: step 1/1. Catalyzes the condensation of pantoate with beta-alanine in an ATP-dependent reaction via a pantoyl-adenylate intermediate. In Halorhodospira halophila (strain DSM 244 / SL1) (Ectothiorhodospira halophila (strain DSM 244 / SL1)), this protein is Pantothenate synthetase.